Consider the following 210-residue polypeptide: Riboflavin kinase (210 aa).

The span at 1–11 (MRPSNPRPPVT) shows a compositional bias: pro residues. The disordered stretch occupies residues 1–24 (MRPSNPRPPVTGPDSGPEAPFPIR). The Mg(2+) site is built by Thr-44 and Asn-46. The active-site Nucleophile is Glu-113.

This sequence belongs to the flavokinase family. The cofactor is Zn(2+). Mg(2+) is required as a cofactor.

It carries out the reaction riboflavin + ATP = FMN + ADP + H(+). It participates in cofactor biosynthesis; FMN biosynthesis; FMN from riboflavin (ATP route): step 1/1. Its function is as follows. Catalyzes the phosphorylation of riboflavin (vitamin B2) to form flavin mononucleotide (FMN) coenzyme. The sequence is that of Riboflavin kinase (fmn1) from Emericella nidulans (strain FGSC A4 / ATCC 38163 / CBS 112.46 / NRRL 194 / M139) (Aspergillus nidulans).